A 123-amino-acid polypeptide reads, in one-letter code: SOSS complex subunit C homolog (123 aa).

It belongs to the SOSS-C family.

In Drosophila ananassae (Fruit fly), this protein is SOSS complex subunit C homolog.